Here is a 392-residue protein sequence, read N- to C-terminus: Metallophosphoesterase 1 (392 aa).

Residues 25-45 traverse the membrane as a helical segment; that stretch reads KLAALVFAVVLFCEFLIYYLV. A divalent metal cation contacts are provided by Asp73, Asp115, Asn153, His246, His300, and His302. Residues 352 to 372 traverse the membrane as a helical segment; it reads DTVLATYCVAAGLLVVLILVH.

Belongs to the metallophosphoesterase superfamily. MPPE1 family. Interacts with GPI-anchor proteins (via the GPI portion). Interacts with TMED10. Requires Mn(2+) as cofactor.

It localises to the endoplasmic reticulum-Golgi intermediate compartment membrane. Functionally, metallophosphoesterase that catalyzes the removal of a side-chain ethanolamine-phosphate (EtNP) from the second mannose of the GPI-anchor protein intermediate. Participates in the glycan remodeling steps of GPI-anchor maturation to allow an efficient transport of GPI-anchor proteins from the endoplasmic reticulum to the Golgi. The sequence is that of Metallophosphoesterase 1 from Ailuropoda melanoleuca (Giant panda).